Here is a 300-residue protein sequence, read N- to C-terminus: Bifunctional protein FolD (300 aa).

Residues Gly168–Ser170, Ser193, and Ile234 contribute to the NADP(+) site.

This sequence belongs to the tetrahydrofolate dehydrogenase/cyclohydrolase family. In terms of assembly, homodimer.

The catalysed reaction is (6R)-5,10-methylene-5,6,7,8-tetrahydrofolate + NADP(+) = (6R)-5,10-methenyltetrahydrofolate + NADPH. It carries out the reaction (6R)-5,10-methenyltetrahydrofolate + H2O = (6R)-10-formyltetrahydrofolate + H(+). It participates in one-carbon metabolism; tetrahydrofolate interconversion. Functionally, catalyzes the oxidation of 5,10-methylenetetrahydrofolate to 5,10-methenyltetrahydrofolate and then the hydrolysis of 5,10-methenyltetrahydrofolate to 10-formyltetrahydrofolate. This is Bifunctional protein FolD from Ehrlichia ruminantium (strain Welgevonden).